We begin with the raw amino-acid sequence, 442 residues long: Interferon-related developmental regulator 2 (442 aa).

The span at 1-15 (MPRARKGNTLRKGGQ) shows a compositional bias: basic residues. Residues 1–71 (MPRARKGNTL…DVVDEQGQQE (71 aa)) form a disordered region. Residues 43-56 (TASECPSLLSTTAE) are compositionally biased toward polar residues.

This sequence belongs to the IFRD family. Associates with ribosomes; promoting ribosome inactivation. In terms of tissue distribution, expressed in many tissues including heart, brain, placenta, lung, liver, skeletal muscle, kidney and pancreas.

In terms of biological role, ribosome-binding protein that acts as an inhibitor of mRNA translation by promoting ribosome inactivation. Associates with the P- and E-sites of the ribosome and inserts a C-terminal helix into the mRNA exit channel to preclude translation. In Homo sapiens (Human), this protein is Interferon-related developmental regulator 2.